The chain runs to 60 residues: Cytotoxin 3 (60 aa).

4 cysteine pairs are disulfide-bonded: Cys3/Cys21, Cys14/Cys38, Cys42/Cys53, and Cys54/Cys59.

This sequence belongs to the three-finger toxin family. Short-chain subfamily. Type IA cytotoxin sub-subfamily. As to quaternary structure, monomer in solution; Homodimer and oligomer in the presence of negatively charged lipids forming a pore with a size ranging between 20 and 30 Angstroms. As to expression, expressed by the venom gland.

The protein localises to the secreted. The protein resides in the target cell membrane. Functionally, shows cytolytic activity on many different cells by forming pore in lipid membranes. In vivo, increases heart rate or kills the animal by cardiac arrest. In addition, it binds to heparin with high affinity, interacts with Kv channel-interacting protein 1 (KCNIP1) in a calcium-independent manner, and binds to integrin alpha-V/beta-3 (ITGAV/ITGB3) with moderate affinity. This Naja annulifera (Banded Egyptian cobra) protein is Cytotoxin 3.